Consider the following 355-residue polypeptide: Oligopeptide transport ATP-binding protein AmiE (355 aa).

In terms of domain architecture, ABC transporter spans 9–260 (LTARDIVVEF…PRHPYTWSLL (252 aa)). 45–52 (GESGSGKS) lines the ATP pocket.

This sequence belongs to the ABC transporter superfamily.

It localises to the cell membrane. Its function is as follows. Part of the binding-protein-dependent transport system for oligopeptides. Probably responsible for energy coupling to the transport system. The polypeptide is Oligopeptide transport ATP-binding protein AmiE (amiE) (Streptococcus pneumoniae serotype 4 (strain ATCC BAA-334 / TIGR4)).